Consider the following 110-residue polypeptide: BET1-like protein (110 aa).

The Cytoplasmic segment spans residues Met-1–Lys-85. The t-SNARE coiled-coil homology domain occupies Asp-14–Met-76. The helical; Anchor for type IV membrane protein transmembrane segment at Ile-86–Ser-106 threads the bilayer. Residues Arg-107–Asn-110 are Lumenal-facing.

As to quaternary structure, component of a SNARE complex consisting of stx5, ykt6, gosr2 and bet1l.

It is found in the golgi apparatus membrane. In terms of biological role, vesicle SNARE required for targeting and fusion of retrograde transport vesicles with the Golgi complex. Required for the integrity of the Golgi complex. In Danio rerio (Zebrafish), this protein is BET1-like protein (bet1l).